A 963-amino-acid polypeptide reads, in one-letter code: IQ motif and SEC7 domain-containing protein 1 (963 aa).

The tract at residues Ser21–Thr88 is disordered. Residues Ser29 to Ser38 are compositionally biased toward polar residues. 3 positions are modified to phosphoserine: Ser89, Ser105, and Ser107. One can recognise an IQ domain in the interval Thr134–Glu163. Phosphoserine occurs at positions 180, 249, and 253. Disordered stretches follow at residues Leu312–Leu332 and Lys349–Trp513. Basic and acidic residues-rich tracts occupy residues Glu366 to His376 and Leu430 to Asp446. Positions Asp471–Ser489 are enriched in low complexity. Ser512 and Ser515 each carry phosphoserine. Residues Ala517–Arg710 form the SEC7 domain. The 93-residue stretch at His774–Glu866 folds into the PH domain. Positions Gln848–Gln879 form a coiled coil. The residue at position 892 (Ser892) is a Phosphoserine. The residue at position 911 (Tyr911) is a Phosphotyrosine. The segment at Leu922–Asn947 is disordered. Phosphoserine occurs at positions 924 and 925.

This sequence belongs to the BRAG family. Interacts with ARF1 and ARF6. Interacts with GRIA2; the interaction is required for ARF6 activation. As to expression, expressed in brain, ovary, heart, lung, liver, kidney and leukocytes. Moderate expression was also detected in lung, skeletal muscle, placenta, small intestine, pancreas, spleen and testis.

Its subcellular location is the cytoplasm. The protein resides in the nucleus. It localises to the postsynaptic density. The protein localises to the cytoplasmic vesicle. It is found in the secretory vesicle. Its subcellular location is the synaptic vesicle. Functionally, guanine nucleotide exchange factor for ARF1 and ARF6. Guanine nucleotide exchange factor activity is enhanced by lipid binding. Accelerates GTP binding by ARFs of all three classes. Guanine nucleotide exchange protein for ARF6, mediating internalization of beta-1 integrin. Involved in neuronal development. In neurons, plays a role in the control of vesicle formation by endocytoc cargo. Upon long term depression, interacts with GRIA2 and mediates the activation of ARF6 to internalize synaptic AMPAR receptors. In Homo sapiens (Human), this protein is IQ motif and SEC7 domain-containing protein 1.